The chain runs to 495 residues: Heterogeneous nuclear ribonucleoprotein Q (495 aa).

A compositionally biased stretch (basic and acidic residues) spans 1–10 (MSDARDNDDR). The tract at residues 1–101 (MSDARDNDDR…KPPSPIDDED (101 aa)) is disordered. 2 stretches are compositionally biased toward acidic residues: residues 11 to 46 (VDFEEGSYSEMEDEVEEEQVEEYEEEEEEDDDDDDV) and 67 to 101 (MEDVQEEIAEDDDNHIDIETADDDEKPPSPIDDED). 3 RRM domains span residues 116–194 (SEVF…LSET), 196–278 (NRLF…WADP), and 292–368 (KALY…LAKP). Residues 452 to 495 (MPMAAAPPQRPRRNDRNNGSSGGSGRDNSHEHDGNRGGRRYRPY) form a disordered region. Residues 478 to 487 (DNSHEHDGNR) show a composition bias toward basic and acidic residues.

Interacts with LHP1 in the nucleus on a common set of chromatin regions. As to expression, predominantly expressed in vascular and meristematic tissues. Expressed throughout development in seedlings, roots, leaves, floral buds and siliques.

It is found in the nucleus. The protein localises to the cytoplasm. The protein resides in the microsome. Transcriptional activator that binds DNA on GAGA-like motif and 5'-(C/G)ACGTG(G/T)C(A/G)-3' consensus motif in the promoters of target genes. Component of ribonucleosomes, which are complexes of at least 20 other different heterogeneous nuclear ribonucleoproteins (hnRNP). hnRNP play an important role in processing of precursor mRNA in the nucleus. Required during flower development and for cell fate determination. Acts both as an antagonist and as a promoter of polycomb LHP1 gene regulation activity, depending of target genes, to regulate the transcription of stress-responsive and flowering genes. May regulate histone H3 trimethylation on lysine 27 (H3K27me3). Recognizes and binds histone H3 tails methylated at 'Lys-4' (H3K4me) and acetylated at 'Lys-9' (H3K9ac), leading to epigenetic activation. When in complex with LHP1, recognizes and binds histone H3 tails methylated at 'Lys-4' (H3K4me) and 'Lys-27' (H3K27me), mostly corresponding to stress-responsive genes. May function as a suppressor of cell-autonomous immune responses involving glucosinolates, salicylic acid (SA) and jasmonic acid (JA) pathways toward pathogenic bacteria and fungi. The sequence is that of Heterogeneous nuclear ribonucleoprotein Q from Arabidopsis thaliana (Mouse-ear cress).